The following is a 197-amino-acid chain: Recombination protein RecR (197 aa).

The C4-type zinc-finger motif lies at 57 to 72 (CSICFAITEDDPCAIC). Residues 79-174 (GTICVVENSQ…RISRLAHGIP (96 aa)) form the Toprim domain.

This sequence belongs to the RecR family.

Its function is as follows. May play a role in DNA repair. It seems to be involved in an RecBC-independent recombinational process of DNA repair. It may act with RecF and RecO. The protein is Recombination protein RecR of Pelobacter propionicus (strain DSM 2379 / NBRC 103807 / OttBd1).